Consider the following 448-residue polypeptide: Tryptophan dimethylallyltransferase 1 (448 aa).

L-tryptophan is bound by residues 80–81 (IL) and E89. The substrate site is built by R100, K186, and Y188. Positions 190 and 249 each coordinate L-tryptophan. Substrate is bound by residues R262, K264, Y266, Q348, Y350, Y414, and Y418.

The protein belongs to the tryptophan dimethylallyltransferase family. Homodimer.

It catalyses the reaction L-tryptophan + dimethylallyl diphosphate = 4-(3-methylbut-2-enyl)-L-tryptophan + diphosphate. Its pathway is alkaloid biosynthesis; ergot alkaloid biosynthesis. Its function is as follows. Tryptophan dimethylallyltransferase; part of the gene cluster that mediates the biosynthesis of fungal ergot alkaloid. DmaW catalyzes the first step of ergot alkaloid biosynthesis by condensing dimethylallyl diphosphate (DMAP) and tryptophan to form 4-dimethylallyl-L-tryptophan. The second step is catalyzed by the methyltransferase easF that methylates 4-dimethylallyl-L-tryptophan in the presence of S-adenosyl-L-methionine, resulting in the formation of 4-dimethylallyl-L-abrine. The catalase easC and the FAD-dependent oxidoreductase easE then transform 4-dimethylallyl-L-abrine to chanoclavine-I which is further oxidized by easD in the presence of NAD(+), resulting in the formation of chanoclavine-I aldehyde. Agroclavine dehydrogenase easG then mediates the conversion of chanoclavine-I aldehyde to agroclavine via a non-enzymatic adduct reaction: the substrate is an iminium intermediate that is formed spontaneously from chanoclavine-I aldehyde in the presence of glutathione. The presence of easA is not required to complete this reaction. Further conversion of agroclavine to paspalic acid is a two-step process involving oxidation of agroclavine to elymoclavine and of elymoclavine to paspalic acid, the second step being performed by the elymoclavine oxidase cloA. Paspalic acid is then further converted to D-lysergic acid. Ergopeptines are assembled from D-lysergic acid and three different amino acids by the D-lysergyl-peptide-synthetases composed each of a monomudular and a trimodular nonribosomal peptide synthetase subunit. LpsB and lpsC encode the monomodular subunits responsible for D-lysergic acid activation and incorporation into the ergopeptine backbone. LpsA1 and A2 subunits encode the trimodular nonribosomal peptide synthetase assembling the tripeptide portion of ergopeptines. LpsA1 is responsible for formation of the major ergopeptine, ergotamine, and lpsA2 for alpha-ergocryptine, the minor ergopeptine of the total alkaloid mixture elaborated by C.purpurea. D-lysergyl-tripeptides are assembled by the nonribosomal peptide synthetases and released as N-(D-lysergyl-aminoacyl)-lactams. Cyclolization of the D-lysergyl-tripeptides is performed by the Fe(2+)/2-ketoglutarate-dependent dioxygenase easH which introduces a hydroxyl group into N-(D-lysergyl-aminoacyl)-lactam at alpha-C of the aminoacyl residue followed by spontaneous condensation with the terminal lactam carbonyl group. In Claviceps purpurea (Ergot fungus), this protein is Tryptophan dimethylallyltransferase 1.